Reading from the N-terminus, the 209-residue chain is Small ribosomal subunit protein uS3 (209 aa).

The 70-residue stretch at 38 to 107 (IRKVIKSKYA…RFIVNVEEIK (70 aa)) folds into the KH type-2 domain.

The protein belongs to the universal ribosomal protein uS3 family. Part of the 30S ribosomal subunit. Forms a tight complex with proteins S10 and S14.

Functionally, binds the lower part of the 30S subunit head. Binds mRNA in the 70S ribosome, positioning it for translation. This chain is Small ribosomal subunit protein uS3, found in Thermosipho melanesiensis (strain DSM 12029 / CIP 104789 / BI429).